The sequence spans 498 residues: 4-aminobutyrate aminotransferase (498 aa).

Gly164–Ser165 contributes to the pyridoxal 5'-phosphate binding site. Residue Arg222 coordinates substrate. The residue at position 356 (Lys356) is an N6-(pyridoxal phosphate)lysine. Position 381 (Thr381) interacts with pyridoxal 5'-phosphate.

The protein belongs to the class-III pyridoxal-phosphate-dependent aminotransferase family. In terms of assembly, homodimer. The cofactor is pyridoxal 5'-phosphate.

The protein resides in the cytoplasm. It carries out the reaction 4-aminobutanoate + 2-oxoglutarate = succinate semialdehyde + L-glutamate. Functionally, deaminates gamma-aminobutyric acid (GABA) to succinate-semialdehyde, which in turn is converted to succinate by the succinate semialdehyde dehydrogenase. Required for the degradation of GABA, which is important for utilization of GABA as nitrogen source. This chain is 4-aminobutyrate aminotransferase (gatA), found in Emericella nidulans (strain FGSC A4 / ATCC 38163 / CBS 112.46 / NRRL 194 / M139) (Aspergillus nidulans).